The following is a 443-amino-acid chain: Cyclic GMP-AMP synthase (443 aa).

Ser61 contributes to the ATP binding site. Residues Asp78 and Asp80 contribute to the active site. Asp80 contacts Mg(2+). Residue Asn124 participates in ATP binding. The active site involves Asp138. Asp138 provides a ligand contact to Mg(2+). Residue Leu208 coordinates ATP.

The protein belongs to the CD-NTase family. B06 subfamily. Requires Mg(2+) as cofactor.

It catalyses the reaction GTP + ATP = 3',3'-cGAMP + 2 diphosphate. The enzyme catalyses UTP + ATP = 3',3'-cUAMP + 2 diphosphate. It carries out the reaction 2 ATP = 3',3'-c-di-AMP + 2 diphosphate. The catalysed reaction is 2 GTP = 3',3'-c-di-GMP + 2 diphosphate. It catalyses the reaction UTP + GTP = 3',3'-cGMP-UMP + 2 diphosphate. Its function is as follows. Cyclic nucleotide synthase (second messenger synthase) of a CBASS antivirus system. CBASS (cyclic oligonucleotide-based antiphage signaling system) provides immunity against bacteriophages. The CD-NTase protein (CdnB, this protein) synthesizes cyclic nucleotides in response to infection; these serve as specific second messenger signals. The signals activate a diverse range of effectors, leading to bacterial cell death and thus abortive phage infection. The effector protein for this system is membrane protein Cap15. Catalyzes the synthesis of 3',3'-cyclic GMP-AMP (3'3'-cGAMP) from GTP and ATP, a second messenger in cell signal transduction. Also makes cyclic UMP-AMP, cyclic UMP-GMP, cyclic di-AMP and cyclic-di-GMP. In terms of biological role, protects E.coli against phage infection. When the CBASS operon (cdnB-cap15) is introduced in E.coli MG1655 there is about 100-fold protection against phage T2 and about 10-fold protection against phage T5 and T6. The polypeptide is Cyclic GMP-AMP synthase (Escherichia albertii).